Reading from the N-terminus, the 288-residue chain is Phenazine biosynthesis-like domain-containing protein 2 (288 aa).

E46 is an active-site residue.

It belongs to the PhzF family.

The chain is Phenazine biosynthesis-like domain-containing protein 2 (Pbld2) from Mus musculus (Mouse).